We begin with the raw amino-acid sequence, 477 residues long: Glycogen synthase (477 aa).

Lysine 15 contacts ADP-alpha-D-glucose.

Belongs to the glycosyltransferase 1 family. Bacterial/plant glycogen synthase subfamily.

The catalysed reaction is [(1-&gt;4)-alpha-D-glucosyl](n) + ADP-alpha-D-glucose = [(1-&gt;4)-alpha-D-glucosyl](n+1) + ADP + H(+). The protein operates within glycan biosynthesis; glycogen biosynthesis. Synthesizes alpha-1,4-glucan chains using ADP-glucose. The chain is Glycogen synthase from Halorhodospira halophila (strain DSM 244 / SL1) (Ectothiorhodospira halophila (strain DSM 244 / SL1)).